Consider the following 418-residue polypeptide: Perilipin-1 homolog (418 aa).

A required for lipid droplet localization region spans residues 211-275 (LTIGQRVKNL…EKKTWVIEKS (65 aa)).

This sequence belongs to the perilipin family. As to expression, expressed in intestinal and epidermal cells. Expressed in the muscle and hypodermis.

Its subcellular location is the lipid droplet. Its function is as follows. Lipid droplet-associated protein which plays a role in lipid droplet clustering. The sequence is that of Perilipin-1 homolog from Caenorhabditis elegans.